We begin with the raw amino-acid sequence, 345 residues long: S-adenosylmethionine:tRNA ribosyltransferase-isomerase (345 aa).

It belongs to the QueA family. As to quaternary structure, monomer.

The protein resides in the cytoplasm. It catalyses the reaction 7-aminomethyl-7-carbaguanosine(34) in tRNA + S-adenosyl-L-methionine = epoxyqueuosine(34) in tRNA + adenine + L-methionine + 2 H(+). It participates in tRNA modification; tRNA-queuosine biosynthesis. Functionally, transfers and isomerizes the ribose moiety from AdoMet to the 7-aminomethyl group of 7-deazaguanine (preQ1-tRNA) to give epoxyqueuosine (oQ-tRNA). The polypeptide is S-adenosylmethionine:tRNA ribosyltransferase-isomerase (Finegoldia magna (strain ATCC 29328 / DSM 20472 / WAL 2508) (Peptostreptococcus magnus)).